A 798-amino-acid chain; its full sequence is Sodium/hydrogen exchanger 4 (798 aa).

The Cytoplasmic portion of the chain corresponds to 1-13 (MALQMFVTYSPWN). An intramembrane region (name=A/M1) is located at residues 14–28 (CLLLLVALECSEASS). The Cytoplasmic portion of the chain corresponds to 29-69 (DLNESANSTAQYASNAWFAAASSEPEEGISVFELDYDYVQI). An intramembrane region (name=B/M2) is located at residues 70–90 (PYEVTLWILLASLAKIGFHLY). Residues 91–94 (HRLP) lie on the Cytoplasmic side of the membrane. Residues 95–115 (GLMPESCLLILVGALVGGIIF) traverse the membrane as a helical segment. Topologically, residues 116–127 (GTDHKSPPVMDS) are extracellular. A helical transmembrane segment spans residues 128–148 (SIYFLYLLPPIVLEGGYFMPT). Topologically, residues 149–154 (RPFFEN) are cytoplasmic. The chain crosses the membrane as a helical span at residues 155–175 (IGSILWWAVLGALINALGIGL). Residues 176-196 (SLYLICQVKAFGLGDVNLLQN) are Extracellular-facing. The chain crosses the membrane as a helical span at residues 197-217 (LLFGSLISAVDPVAVLAVFEE). Over 218–226 (ARVNEQLYM) the chain is Cytoplasmic. Residues 227-247 (MIFGEALLNDGITVVLYNMLI) traverse the membrane as a helical segment. Residues 248-270 (AFTKMHKFEDIETVDILAGCARF) are Extracellular-facing. Residues 271–291 (IVVGLGGVLFGIVFGFISAFI) form a helical membrane-spanning segment. At 292–304 (TRFTQNISAIEPL) the chain is on the cytoplasmic side. The chain crosses the membrane as a helical span at residues 305–325 (IVFMFSYLSYLAAETLYLSGI). The Extracellular segment spans residues 326 to 356 (LAITACAVTMKKYVEENVSQTSYTTIKYFMK). Asn-342 carries an N-linked (GlcNAc...) asparagine glycan. Residues 357–373 (MLSSVSETLIFIFMGVS) traverse the membrane as a helical segment. The Cytoplasmic segment spans residues 374–384 (TVGKNHEWNWA). Residues 385 to 405 (FICFTLAFCQIWRAISVFALF) traverse the membrane as a helical segment. Residues 406 to 420 (YISNQFRTFPFSIKD) lie on the Extracellular side of the membrane. An intramembrane region (name=L) is located at residues 421–441 (QCIIFYSGVRGAGSFSLAFLL). Residues 442–450 (PLSLFPRKK) lie on the Extracellular side of the membrane. The chain crosses the membrane as a helical span at residues 451–471 (MFVTATLVVIYFTVFIQGITV). Residues 472 to 798 (GPLVRYLDVK…RSHSPLLQKK (327 aa)) are Cytoplasmic-facing. 2 disordered regions span residues 662–690 (PYGN…GSPS) and 776–798 (RWTA…LQKK). Over residues 784 to 798 (GRDHHRSHSPLLQKK) the composition is skewed to basic residues.

It belongs to the monovalent cation:proton antiporter 1 (CPA1) transporter (TC 2.A.36) family. As to quaternary structure, homodimer; each protomer has one site for sodium and one site for proton binding. Interacts with CHP1 and CHP2. Post-translationally, may be phosphorylated.

The protein resides in the basolateral cell membrane. Its subcellular location is the apical cell membrane. It localises to the zymogen granule membrane. The enzyme catalyses Na(+)(in) + H(+)(out) = Na(+)(out) + H(+)(in). It carries out the reaction Na(+)(out) + NH4(+)(in) = Na(+)(in) + NH4(+)(out). Electroneutral antiporter that exchanges sodium for protons or ammonium ions at the basolateral membrane of epithelia to regulate cell volume and intracellular pH upon hypertonic conditions. As part of transcellular ammonia transport in renal tubules, mediates basolateral ammonium extrusion in the medullary thick ascending limb, regulating the corticopapillary ammonium gradient and overall renal acid excretion. Mediates sodium:proton exchange in gastric parietal cells secondary to cAMP-dependent acid secretion and hyperosmolarity. Possibly coupled to chloride:bicarbonate antiporter, enables loading of parietal cells with sodium and chloride ions to maintain cell volume and normal gastric acid secretion. Functions as a sodium sensor in neurons of organum vasculosum of the lamina terminalis where it regulates water intake in response to increased sodium concentration in body fluids. The sequence is that of Sodium/hydrogen exchanger 4 (SLC9A4) from Homo sapiens (Human).